Here is a 185-residue protein sequence, read N- to C-terminus: MKLLKESLKNAPVIMKGNYPYFIHPLTDGIPEIDPAVLKDAVNEIIKVIDIDNFDKIVAVEAMGLPIGVALSMELTKPMTVIRKRPYGLSGEVMVEQQTGYSKGKLYINSISSQDTLLLVDDVLSTGGTITAVVDGIKKIGAKISDIVVVVNKNRNIKEVEQKIGFKIKTIVNIEIVDGKVKVLD.

It belongs to the purine/pyrimidine phosphoribosyltransferase family. Archaeal HPRT subfamily. As to quaternary structure, homodimer.

It localises to the cytoplasm. It catalyses the reaction IMP + diphosphate = hypoxanthine + 5-phospho-alpha-D-ribose 1-diphosphate. The enzyme catalyses GMP + diphosphate = guanine + 5-phospho-alpha-D-ribose 1-diphosphate. The protein operates within purine metabolism; IMP biosynthesis via salvage pathway; IMP from hypoxanthine: step 1/1. Functionally, catalyzes a salvage reaction resulting in the formation of IMP that is energically less costly than de novo synthesis. The sequence is that of Hypoxanthine/guanine phosphoribosyltransferase from Aciduliprofundum boonei (strain DSM 19572 / T469).